The chain runs to 181 residues: Alkyl hydroperoxide reductase AhpD (181 aa).

Residue cysteine 131 is the Proton donor of the active site. Cysteine 131 and cysteine 134 are joined by a disulfide. Cysteine 134 functions as the Cysteine sulfenic acid (-SOH) intermediate in the catalytic mechanism.

Belongs to the AhpD family.

The enzyme catalyses N(6)-[(R)-dihydrolipoyl]-L-lysyl-[lipoyl-carrier protein] + a hydroperoxide = N(6)-[(R)-lipoyl]-L-lysyl-[lipoyl-carrier protein] + an alcohol + H2O. Functionally, antioxidant protein with alkyl hydroperoxidase activity. Required for the reduction of the AhpC active site cysteine residues and for the regeneration of the AhpC enzyme activity. The protein is Alkyl hydroperoxide reductase AhpD of Rhodopseudomonas palustris (strain BisA53).